We begin with the raw amino-acid sequence, 177 residues long: Ubiquinol-cytochrome c reductase iron-sulfur subunit (177 aa).

The helical transmembrane segment at 18 to 38 (IVLTASSVAAVGAACAFWPII) threads the bilayer. Residues 88–175 (ARAVKMSELI…YIFISDTKIR (88 aa)) form the Rieske domain. The [2Fe-2S] cluster site is built by Cys-120, His-122, Cys-139, and His-142. Cys-125 and Cys-141 form a disulfide bridge.

This sequence belongs to the Rieske iron-sulfur protein family. As to quaternary structure, the main subunits of complex b-c1 are: cytochrome b, cytochrome c1 and the Rieske protein. It depends on [2Fe-2S] cluster as a cofactor.

The protein resides in the cell membrane. The catalysed reaction is a quinol + 2 Fe(III)-[cytochrome c](out) = a quinone + 2 Fe(II)-[cytochrome c](out) + 2 H(+)(out). Component of the ubiquinol-cytochrome c reductase complex (complex III or cytochrome b-c1 complex), which is a respiratory chain that generates an electrochemical potential coupled to ATP synthesis. The chain is Ubiquinol-cytochrome c reductase iron-sulfur subunit (petA) from Rickettsia typhi (strain ATCC VR-144 / Wilmington).